Consider the following 161-residue polypeptide: Type II secretion system protein M (161 aa).

Residues 1 to 16 lie on the Cytoplasmic side of the membrane; sequence MNELRRRWQVMSQRER. A helical membrane pass occupies residues 17-37; the sequence is LMALACGGLVVLCLLYYLIWA. Residues 38–161 are Periplasmic-facing; that stretch reads PWQESVRQWQ…VTRLSLERVL (124 aa).

Belongs to the GSP M family. As to quaternary structure, type II secretion system is composed of four main components: the outer membrane complex, the inner membrane complex, the cytoplasmic secretion ATPase and the periplasm-spanning pseudopilus. Forms homodimers. Interacts with OutL/GspL. Interacts with OutE/GspE and OutF/GspF.

The protein localises to the cell inner membrane. Its function is as follows. Inner membrane component of the type II secretion system required for the energy-dependent secretion of extracellular factors such as proteases and toxins from the periplasm. Plays a role in the complex assembly and recruits OutL resulting in a stable complex in the inner membrane. Provides thus a link between the energy-providing OutE protein in the cytoplasm and the rest of the T2SS machinery. The polypeptide is Type II secretion system protein M (outM) (Dickeya chrysanthemi (Pectobacterium chrysanthemi)).